We begin with the raw amino-acid sequence, 594 residues long: Potassium-transporting ATPase potassium-binding subunit (594 aa).

A run of 12 helical transmembrane segments spans residues 4–24, 65–85, 136–156, 179–199, 287–307, 314–334, 361–381, 390–410, 413–433, 450–470, 518–538, and 560–580; these read QFFG…PFLG, QYAV…YALQ, ALTV…FALI, LYVL…QGVI, LEML…GEMV, VAIL…TQNA, FGVA…CGAV, AMGG…FGGV, GLYG…LMIG, MVSI…ALAV, LLGL…LALA, and LFIV…YVPA.

This sequence belongs to the KdpA family. As to quaternary structure, the system is composed of three essential subunits: KdpA, KdpB and KdpC.

It is found in the cell inner membrane. Part of the high-affinity ATP-driven potassium transport (or Kdp) system, which catalyzes the hydrolysis of ATP coupled with the electrogenic transport of potassium into the cytoplasm. This subunit binds the periplasmic potassium ions and delivers the ions to the membrane domain of KdpB through an intramembrane tunnel. The sequence is that of Potassium-transporting ATPase potassium-binding subunit from Bordetella avium (strain 197N).